The following is a 402-amino-acid chain: uncharacterized protein (402 aa).

12 consecutive transmembrane segments (helical) span residues I26 to Y46, V67 to F87, F96 to I116, T126 to L146, L168 to L188, Y213 to S233, L235 to G255, P289 to I309, I312 to L332, F338 to I358, F360 to L380, and L381 to I401.

This sequence belongs to the chromate ion transporter (CHR) (TC 2.A.51) family.

Its subcellular location is the cell membrane. This is an uncharacterized protein from Methanocaldococcus jannaschii (strain ATCC 43067 / DSM 2661 / JAL-1 / JCM 10045 / NBRC 100440) (Methanococcus jannaschii).